The following is a 342-amino-acid chain: Methylthioribose-1-phosphate isomerase (342 aa).

Residues 49-51 (RGA), Arg86, and Gln187 contribute to the substrate site. The Proton donor role is filled by Asp228. 238-239 (NK) contributes to the substrate binding site.

Belongs to the eIF-2B alpha/beta/delta subunits family. MtnA subfamily.

The catalysed reaction is 5-(methylsulfanyl)-alpha-D-ribose 1-phosphate = 5-(methylsulfanyl)-D-ribulose 1-phosphate. Its pathway is amino-acid biosynthesis; L-methionine biosynthesis via salvage pathway; L-methionine from S-methyl-5-thio-alpha-D-ribose 1-phosphate: step 1/6. Functionally, catalyzes the interconversion of methylthioribose-1-phosphate (MTR-1-P) into methylthioribulose-1-phosphate (MTRu-1-P). The sequence is that of Methylthioribose-1-phosphate isomerase from Serratia proteamaculans (strain 568).